The following is a 190-amino-acid chain: Movement protein TGB3 (190 aa).

Residues 1 to 52 are Cytoplasmic-facing; sequence MDPPVILHSPNCSCQFCSSELPSTHTCGSQDRTVPLHVEATAAGHMEAKNFS. A helical transmembrane segment spans residues 53–73; that stretch reads LQYVLLVAFVSVLLGFSFCVY. The Lumenal portion of the chain corresponds to 74–166; it reads LKSMSNDEAS…TPCENNVLLK (93 aa). 2 positions are modified to phosphotyrosine: Tyr-89 and Tyr-120. Positions 89-93 match the Involved in plasmodesmata targeting and virus cell-to-cell movement motif; it reads YQDLN. Residues 167-187 form a helical membrane-spanning segment; the sequence is LWKDDLSFTIIAVTVLVGAML. Residues 188–190 are Cytoplasmic-facing; the sequence is ARC.

Belongs to the virgaviridae TGB3 movement protein family. As to quaternary structure, interacts with movement protein TGB2. TGB1-TGB3-TGB2 complex formation is enhanced by ATP hydrolysis.

The protein resides in the host cell junction. It is found in the host plasmodesma. The protein localises to the host endoplasmic reticulum membrane. Its subcellular location is the host cytoplasm. It localises to the host cytoskeleton. In terms of biological role, participates in the transport of viral genome to neighboring plant cells directly through plasmodesmata, without any budding. TGBp2 and TGBp3 are necessary for intracellular delivery of TGBp1-containing vRNPs to plasmodesmata. Can gate plasmodesmata and increase their size exclusion limit. Induces host actin cytoskeleton network thickening, which probably plays a major role in virus cell-to-cell movement. The chain is Movement protein TGB3 from Solanum nigrum (Black nightshade).